A 388-amino-acid chain; its full sequence is Leucine aminopeptidase 1 (388 aa).

The signal sequence occupies residues 1 to 19 (MKLPALLILGVAASTMVLA). Positions 20 to 88 (AIAPDQVPLN…LPKVFPTPAV (69 aa)) are excised as a propeptide. N-linked (GlcNAc...) asparagine glycans are attached at residues N96, N119, N149, N164, and N181. H189 and D207 together coordinate Zn(2+). Residue N232 is glycosylated (N-linked (GlcNAc...) asparagine). Residues E246 and D273 each contribute to the Zn(2+) site. C322 and C326 form a disulfide bridge. H355 provides a ligand contact to Zn(2+).

The protein belongs to the peptidase M28 family. M28E subfamily. In terms of assembly, monomer. Requires Zn(2+) as cofactor.

Its subcellular location is the secreted. In terms of biological role, extracellular aminopeptidase that allows assimilation of proteinaceous substrates. The polypeptide is Leucine aminopeptidase 1 (LAP1) (Paracoccidioides brasiliensis (strain Pb03)).